We begin with the raw amino-acid sequence, 269 residues long: 2-dehydro-3-deoxyphosphooctonate aldolase (269 aa).

This sequence belongs to the KdsA family.

The protein resides in the cytoplasm. The catalysed reaction is D-arabinose 5-phosphate + phosphoenolpyruvate + H2O = 3-deoxy-alpha-D-manno-2-octulosonate-8-phosphate + phosphate. The protein operates within carbohydrate biosynthesis; 3-deoxy-D-manno-octulosonate biosynthesis; 3-deoxy-D-manno-octulosonate from D-ribulose 5-phosphate: step 2/3. Its pathway is bacterial outer membrane biogenesis; lipopolysaccharide biosynthesis. This chain is 2-dehydro-3-deoxyphosphooctonate aldolase, found in Chlamydia caviae (strain ATCC VR-813 / DSM 19441 / 03DC25 / GPIC) (Chlamydophila caviae).